A 270-amino-acid polypeptide reads, in one-letter code: 4-hydroxy-tetrahydrodipicolinate reductase (270 aa).

7-12 is a binding site for NAD(+); sequence GVSGRM. Residue Arg-34 coordinates NADP(+). NAD(+) is bound by residues 97-99 and 121-124; these read GTT and SGNM. His-155 serves as the catalytic Proton donor/acceptor. (S)-2,3,4,5-tetrahydrodipicolinate is bound at residue His-156. Lys-159 functions as the Proton donor in the catalytic mechanism. Residue 165–166 coordinates (S)-2,3,4,5-tetrahydrodipicolinate; sequence GT.

This sequence belongs to the DapB family.

It localises to the cytoplasm. The catalysed reaction is (S)-2,3,4,5-tetrahydrodipicolinate + NAD(+) + H2O = (2S,4S)-4-hydroxy-2,3,4,5-tetrahydrodipicolinate + NADH + H(+). It catalyses the reaction (S)-2,3,4,5-tetrahydrodipicolinate + NADP(+) + H2O = (2S,4S)-4-hydroxy-2,3,4,5-tetrahydrodipicolinate + NADPH + H(+). The protein operates within amino-acid biosynthesis; L-lysine biosynthesis via DAP pathway; (S)-tetrahydrodipicolinate from L-aspartate: step 4/4. Functionally, catalyzes the conversion of 4-hydroxy-tetrahydrodipicolinate (HTPA) to tetrahydrodipicolinate. This chain is 4-hydroxy-tetrahydrodipicolinate reductase, found in Allorhizobium ampelinum (strain ATCC BAA-846 / DSM 112012 / S4) (Agrobacterium vitis (strain S4)).